Reading from the N-terminus, the 439-residue chain is Packaging protein 1 (439 aa).

Positions 1-23 are enriched in polar residues; that stretch reads MSTQIPARQETYDPSQSSGTKTP. Residues 1 to 42 are disordered; that stretch reads MSTQIPARQETYDPSQSSGTKTPSHPYDGNPTRSYPKRNAGK. An ATP-binding site is contributed by 151 to 158; that stretch reads GPTGSGKS. The segment at 419 to 439 is DNA-binding; sequence ERNPKLTDLEKLSPPGTFQET.

It belongs to the adenoviridae packaging protein 1 family. In terms of assembly, homodimer. Part of a genome packaging complex composed of packaging proteins 1, 2 and 3; this complex specifically binds to the packaging sequence on the left end of viral genomic DNA and performs packaging of the viral genome. Interacts with protein 33K.

It is found in the virion. Its subcellular location is the host nucleus. The protein localises to the host nucleoplasm. The protein resides in the host nucleolus. Functionally, component of the packaging machinery which encapsidates the viral DNA into preformed capsids and transcriptional activator of the viral major late promoter (MLP). Binds, along with packaging proteins 2 and 3, to the specific packaging sequence on the left end of viral genomic DNA and displays ATPase activity thereby providing the power stroke of the packaging machinery. The activity of packaging protein IVa2 is stimulated by protein 33K which acts as a terminase. May be the protein that pumps DNA into the capsid powered by ATP hydrolysis. Specifically binds to the 5'-CG-3' nucleotides of the repeats making up the packaging sequence. Component of the DEF-A and DEF-B transcription factors that bind downstream elements of the major late promoter (MLP), and stimulate transcription from the MLP after initiation of viral DNA replication. DEF-A is a heterodimer packaging proteins 1 and 2 and DEF-B is a homodimer of packaging protein 1. The protein is Packaging protein 1 of Fowl adenovirus A serotype 1 (strain CELO / Phelps) (FAdV-1).